A 709-amino-acid chain; its full sequence is PP2C-like domain-containing protein CG9801 (709 aa).

3 disordered regions span residues 121 to 222 (DCYG…NSER), 503 to 530 (LHPS…SRPK), and 678 to 709 (GGGE…ETNF). Residues 130–143 (PPVQVATQNSTRLT) show a composition bias toward polar residues. Residues 182-196 (ANLAAASAGTDAGKA) show a composition bias toward low complexity. Over residues 197–217 (NSDQNNRNVLNAKTEVSTDGD) the composition is skewed to polar residues. The PPM-type phosphatase domain maps to 259-503 (SVSLYETNML…KSASAIYARL (245 aa)).

This is PP2C-like domain-containing protein CG9801 from Drosophila melanogaster (Fruit fly).